The chain runs to 555 residues: Glutamine--tRNA ligase (555 aa).

The short motif at 34–44 (PEPNGYLHIGH) is the 'HIGH' region element. Residues 35–37 (EPN) and 41–47 (HIGHAKS) contribute to the ATP site. Aspartate 67 and tyrosine 212 together coordinate L-glutamine. ATP contacts are provided by residues threonine 231, 261–262 (RL), and 269–271 (MSK). Residues 268-272 (VMSKR) carry the 'KMSKS' region motif.

It belongs to the class-I aminoacyl-tRNA synthetase family. In terms of assembly, monomer.

Its subcellular location is the cytoplasm. The catalysed reaction is tRNA(Gln) + L-glutamine + ATP = L-glutaminyl-tRNA(Gln) + AMP + diphosphate. The polypeptide is Glutamine--tRNA ligase (Proteus mirabilis (strain HI4320)).